We begin with the raw amino-acid sequence, 339 residues long: Phenylalanine--tRNA ligase alpha subunit (339 aa).

Glu253 provides a ligand contact to Mg(2+).

This sequence belongs to the class-II aminoacyl-tRNA synthetase family. Phe-tRNA synthetase alpha subunit type 1 subfamily. In terms of assembly, tetramer of two alpha and two beta subunits. The cofactor is Mg(2+).

It is found in the cytoplasm. The catalysed reaction is tRNA(Phe) + L-phenylalanine + ATP = L-phenylalanyl-tRNA(Phe) + AMP + diphosphate + H(+). The chain is Phenylalanine--tRNA ligase alpha subunit from Thioalkalivibrio sulfidiphilus (strain HL-EbGR7).